Reading from the N-terminus, the 299-residue chain is Coenzyme PQQ synthesis protein B (299 aa).

This sequence belongs to the PqqB family.

It functions in the pathway cofactor biosynthesis; pyrroloquinoline quinone biosynthesis. In terms of biological role, may be involved in the transport of PQQ or its precursor to the periplasm. This is Coenzyme PQQ synthesis protein B from Xanthomonas axonopodis pv. citri (strain 306).